We begin with the raw amino-acid sequence, 378 residues long: Myoglobin (378 aa).

Position 2 is a blocked amino end (Ala) (Ala-2). His-332 contacts heme.

Belongs to the indoleamine 2,3-dioxygenase family. As to quaternary structure, homodimer. It depends on heme as a cofactor.

Its function is as follows. Serves a reserve supply of oxygen and facilitates the movement of oxygen within muscles. This is Myoglobin from Haliotis diversicolor (Abalone).